Consider the following 316-residue polypeptide: NAC domain-containing protein 22 (316 aa).

The NAC domain maps to 17-170 (DLPGFRFHPT…DMVLCKIYRK (154 aa)). Residues 117-176 (IGLKKTLVFYQGRAPRGTKTDWVMNEYRLPDYGAARAAAPPPKEDMVLCKIYRKATPLKE) mediate DNA binding. A disordered region spans residues 229 to 260 (QSSSSSAAPSGSSSKNGGAGAPREAKKEEADV). Over residues 230–244 (SSSSSAAPSGSSSKN) the composition is skewed to low complexity.

The protein resides in the nucleus. In terms of biological role, transcription activator that binds sequence-specific DNA motifs. Involved in stress response. Plays a positive role in drought and salt stress tolerance through the modulation of abscisic acid-mediated signaling. This is NAC domain-containing protein 22 from Oryza sativa subsp. japonica (Rice).